Here is a 498-residue protein sequence, read N- to C-terminus: Glutamyl-tRNA(Gln) amidotransferase subunit A (498 aa).

Residues Lys85 and Ser160 each act as charge relay system in the active site. Residue Ser184 is the Acyl-ester intermediate of the active site.

The protein belongs to the amidase family. GatA subfamily. As to quaternary structure, heterotrimer of A, B and C subunits.

The catalysed reaction is L-glutamyl-tRNA(Gln) + L-glutamine + ATP + H2O = L-glutaminyl-tRNA(Gln) + L-glutamate + ADP + phosphate + H(+). Its function is as follows. Allows the formation of correctly charged Gln-tRNA(Gln) through the transamidation of misacylated Glu-tRNA(Gln) in organisms which lack glutaminyl-tRNA synthetase. The reaction takes place in the presence of glutamine and ATP through an activated gamma-phospho-Glu-tRNA(Gln). This Mycolicibacterium vanbaalenii (strain DSM 7251 / JCM 13017 / BCRC 16820 / KCTC 9966 / NRRL B-24157 / PYR-1) (Mycobacterium vanbaalenii) protein is Glutamyl-tRNA(Gln) amidotransferase subunit A.